The chain runs to 49 residues: Toxic protein HokB (49 aa).

The chain crosses the membrane as a helical span at residues 4 to 24 (NPLVVCLLIICITILTFTLLT).

This sequence belongs to the Hok/Gef family.

It is found in the cell inner membrane. Functionally, toxic component of a type I toxin-antitoxin (TA) system. When overexpressed kills cells within minutes; causes collapse of the transmembrane potential and arrest of respiration. Expression leads to membrane depolarization; when protein levels are high enough depolarization probably leads to lowered metabolic activity which in turn induces some cells to enter the persistent state in which they transiently survive antibiotic exposure. Its toxic effect is probably neutralized by antisense antitoxin RNA SokB, which is encoded in trans on the opposite DNA strand. This Escherichia coli (strain K12) protein is Toxic protein HokB.